Here is a 299-residue protein sequence, read N- to C-terminus: Lipoyl synthase 2 (299 aa).

The [4Fe-4S] cluster site is built by C43, C48, C54, C69, C73, C76, and S294. Residues 55 to 283 form the Radical SAM core domain; that stretch reads YAAGTATFLL…GAVARDLGFA (229 aa).

The protein belongs to the radical SAM superfamily. Lipoyl synthase family. The cofactor is [4Fe-4S] cluster.

It localises to the cytoplasm. It catalyses the reaction [[Fe-S] cluster scaffold protein carrying a second [4Fe-4S](2+) cluster] + N(6)-octanoyl-L-lysyl-[protein] + 2 oxidized [2Fe-2S]-[ferredoxin] + 2 S-adenosyl-L-methionine + 4 H(+) = [[Fe-S] cluster scaffold protein] + N(6)-[(R)-dihydrolipoyl]-L-lysyl-[protein] + 4 Fe(3+) + 2 hydrogen sulfide + 2 5'-deoxyadenosine + 2 L-methionine + 2 reduced [2Fe-2S]-[ferredoxin]. It participates in protein modification; protein lipoylation via endogenous pathway; protein N(6)-(lipoyl)lysine from octanoyl-[acyl-carrier-protein]: step 2/2. Functionally, catalyzes the radical-mediated insertion of two sulfur atoms into the C-6 and C-8 positions of the octanoyl moiety bound to the lipoyl domains of lipoate-dependent enzymes, thereby converting the octanoylated domains into lipoylated derivatives. The sequence is that of Lipoyl synthase 2 from Parasynechococcus marenigrum (strain WH8102).